Here is a 201-residue protein sequence, read N- to C-terminus: Large ribosomal subunit protein uL18 (201 aa).

The protein belongs to the universal ribosomal protein uL18 family. As to quaternary structure, part of the 50S ribosomal subunit. Contacts the 5S and 23S rRNAs.

Functionally, this is one of the proteins that bind and probably mediate the attachment of the 5S RNA into the large ribosomal subunit, where it forms part of the central protuberance. The sequence is that of Large ribosomal subunit protein uL18 from Thermococcus gammatolerans (strain DSM 15229 / JCM 11827 / EJ3).